A 361-amino-acid polypeptide reads, in one-letter code: MRQSLKVMVLSTVALLFMANPAAASEEKKEYLIVVEPEEVSAQSVEESYDVDVIHEFEEIPVIHAELTKKELKKLKKDPNVKAIEKNAEVTISQTVPWGISFINTQQAHNRGIFGNGARVAVLDTGIASHPDLRIAGGASFISSEPSYHDNNGHGTHVAGTIAALNNSIGVLGVAPSADLYAVKVLDRNGSGSLASVAQGIEWAINNNMHIINMSLGSTSGSSTLELAVNRANNAGILLVGAAGNTGRQGVNYPARYSGVMAVAAVDQNGQRASFSTYGPEIEISAPGVNVNSTYTGNRYVSLSGTSMATPHVAGVAALVKSRYPSYTNNQIRQRINQTATYLGSPSLYGNGLVHAGRATQ.

The first 24 residues, 1–24, serve as a signal peptide directing secretion; that stretch reads MRQSLKVMVLSTVALLFMANPAAA. The propeptide occupies 25 to 93; that stretch reads SEEKKEYLIV…IEKNAEVTIS (69 aa). Gln94 lines the Ca(2+) pocket. A Peptidase S8 domain is found at 97 to 360; that stretch reads PWGISFINTQ…NGLVHAGRAT (264 aa). Asp124 acts as the Charge relay system in catalysis. Position 132 (Asp132) interacts with Ca(2+). Catalysis depends on His154, which acts as the Charge relay system. Residues Leu165, Asn167, Ile169, Val171, Ala255, Tyr257, and Val260 each coordinate Ca(2+). Residue Ser307 is the Charge relay system of the active site.

Belongs to the peptidase S8 family. It depends on Ca(2+) as a cofactor.

It localises to the secreted. Shows keratinolytic activity. In Halalkalibacterium halodurans (strain ATCC BAA-125 / DSM 18197 / FERM 7344 / JCM 9153 / C-125) (Bacillus halodurans), this protein is Thermostable alkaline protease.